We begin with the raw amino-acid sequence, 961 residues long: Vinculin (961 aa).

2 repeat units span residues 258–362 (ELDN…MGEL) and 371–470 (LGVD…ELKA). The segment at 258–470 (ELDNLTVLKK…LTQKLYELKA (213 aa)) is 2 X repeats. Residues 720-778 (AIAPPQPPPLPTSLPPPIPELSALHLSNQNAERAPPRPPLPREGLAPVRPPPPETDDED) are disordered. The segment covering 723–738 (PPQPPPLPTSLPPPIP) has biased composition (pro residues). Threonine 774 carries the phosphothreonine modification.

This sequence belongs to the vinculin/alpha-catenin family. As to quaternary structure, exhibits self-association properties.

Its subcellular location is the cytoplasm. The protein resides in the cytoskeleton. It localises to the cell junction. It is found in the adherens junction. The protein localises to the cell membrane. Functionally, involved in cell adhesion. May be involved in the attachment of the actin-based microfilaments to the plasma membrane. The sequence is that of Vinculin (Vinc) from Drosophila melanogaster (Fruit fly).